Reading from the N-terminus, the 358-residue chain is tRNA-specific 2-thiouridylase MnmA (358 aa).

ATP contacts are provided by residues 6 to 13 (ALSGGVDS) and Met-32. The active-site Nucleophile is Cys-103. Cysteines 103 and 201 form a disulfide. Gly-127 is a binding site for ATP. Positions 151–153 (KDQ) are interaction with tRNA. Cys-201 functions as the Cysteine persulfide intermediate in the catalytic mechanism.

Belongs to the MnmA/TRMU family.

It localises to the cytoplasm. The catalysed reaction is S-sulfanyl-L-cysteinyl-[protein] + uridine(34) in tRNA + AH2 + ATP = 2-thiouridine(34) in tRNA + L-cysteinyl-[protein] + A + AMP + diphosphate + H(+). In terms of biological role, catalyzes the 2-thiolation of uridine at the wobble position (U34) of tRNA, leading to the formation of s(2)U34. The sequence is that of tRNA-specific 2-thiouridylase MnmA from Thermotoga sp. (strain RQ2).